Reading from the N-terminus, the 336-residue chain is MLQSLAGSSCVRLVERHRSAWCFGFLVLGYLLYLVFGAVVFSSVELPYEDLLRQELRKLKRRFLEEHECLSEPQLEQFLGRVLEASNYGVSVLSNASGNWNWDFTSALFFASTVLSTTGYGHTVPLSDGGKAFCIIYSVIGIPFTLLFLTAVVQRVTIHVTRRPVLYFHVRWGFSKQAVAIVHAVLLGVVTVSCFFFIPAAVFSVLEDDWNFLESFYFCFISLSTIGLGDYVPGEGYNQKFRELYKIGITCYLLLGLIAMLVVLETFCELHELKKFRKMFYVKKDKEEDQMHIIEHDQLSFSSITDQAAGVQEDQKQNEPFVSPQPPALADGASDH.

The Cytoplasmic portion of the chain corresponds to 1–20 (MLQSLAGSSCVRLVERHRSA). A helical membrane pass occupies residues 21-41 (WCFGFLVLGYLLYLVFGAVVF). The Extracellular portion of the chain corresponds to 42–103 (SSVELPYEDL…SNASGNWNWD (62 aa)). N-linked (GlcNAc...) asparagine glycosylation is present at Asn95. Residues 104 to 116 (FTSALFFASTVLS) constitute an intramembrane region (helical). The stretch at 117–122 (TTGYGH) is an intramembrane region. Positions 117-122 (TTGYGH) are selectivity filter 1. Residues 123-132 (TVPLSDGGKA) are Extracellular-facing. Residues 133–156 (FCIIYSVIGIPFTLLFLTAVVQRV) form a helical membrane-spanning segment. Residues 157-181 (TIHVTRRPVLYFHVRWGFSKQAVAI) are Cytoplasmic-facing. A helical transmembrane segment spans residues 182-202 (VHAVLLGVVTVSCFFFIPAAV). Residues 203–211 (FSVLEDDWN) lie on the Extracellular side of the membrane. An intramembrane region (helical) is located at residues 212–224 (FLESFYFCFISLS). The interval 225–230 (TIGLGD) is selectivity filter 2. The stretch at 225–231 (TIGLGDY) is an intramembrane region. The Extracellular segment spans residues 232–243 (VPGEGYNQKFRE). Residues 244–267 (LYKIGITCYLLLGLIAMLVVLETF) form a helical membrane-spanning segment. The Cytoplasmic segment spans residues 268–336 (CELHELKKFR…PALADGASDH (69 aa)). Residue Lys274 forms a Glycyl lysine isopeptide (Lys-Gly) (interchain with G-Cter in SUMO) linkage. The tract at residues 293-299 (IIEHDQL) is important for intracellular retention in recycling endosomes. Residues 307–336 (QAAGVQEDQKQNEPFVSPQPPALADGASDH) are disordered.

Belongs to the two pore domain potassium channel (TC 1.A.1.8) family. As to quaternary structure, homodimer; disulfide-linked. Heterodimer with KCNK2; disulfide-linked. In astrocytes, forms mostly heterodimeric potassium channels with KCNK2, with only a minor proportion of functional channels containing homodimeric KCNK1. Interacts with KCNK3 and KCNK9, forming functional heterodimeric channels. Interacts with GNG4. Identified in a complex with PSD and ARF6; interacts only with PSD that is bound to ARF6. Interacts with UBE2I. Post-translationally, sumoylation is controversial. Sumoylated by UBE2I. Not sumoylated when expressed in xenopus oocytes or mammalian cells. Sumoylation inactivates the channel, but does not interfere with expression at the cell membrane. Sumoylation of a single subunit is sufficient to silence the dimeric channel. Sumoylation of KCNK1 is sufficient to silence heterodimeric channels formed by KCNK1 and KCNK3 or KCNK9. Desumoylated by SENP1; this activates the channel. Desumoylated by SENP1; this strongly increases halothane-mediated activation of heterodimeric channels formed with KCNK9. SENP1 treatment has no effect.

It is found in the cell membrane. The protein localises to the recycling endosome. Its subcellular location is the synaptic cell membrane. It localises to the cytoplasmic vesicle. The protein resides in the perikaryon. It is found in the cell projection. The protein localises to the dendrite. Its subcellular location is the apical cell membrane. The catalysed reaction is K(+)(in) = K(+)(out). The enzyme catalyses NH4(+)(in) = NH4(+)(out). It carries out the reaction Na(+)(in) = Na(+)(out). It catalyses the reaction Rb(+)(in) = Rb(+)(out). The catalysed reaction is Cs(+)(in) = Cs(+)(out). The enzyme catalyses Li(+)(in) = Li(+)(out). It carries out the reaction L-glutamate(out) = L-glutamate(in). It catalyses the reaction chloride(in) = chloride(out). Its function is as follows. Ion channel that contributes to passive transmembrane potassium transport and to the regulation of the resting membrane potential in brain astrocytes, but also in kidney and in other tissues. Forms dimeric channels through which potassium ions pass in accordance with their electrochemical gradient. The channel is selective for K(+) ions at physiological potassium concentrations and at neutral pH, but becomes permeable to Na(+) at subphysiological K(+) levels and upon acidification of the extracellular medium. The homodimer has very low potassium channel activity, when expressed in heterologous systems, and can function as weakly inward rectifying potassium channel. Channel activity is modulated by activation of serotonin receptors. Heterodimeric channels containing KCNK1 and KCNK2 have much higher activity, and may represent the predominant form in astrocytes. Heterodimeric channels containing KCNK1 and KCNK3 or KCNK9 have much higher activity. Heterodimeric channels formed by KCNK1 and KCNK9 may contribute to halothane-sensitive currents. Mediates outward rectifying potassium currents in dentate gyrus granule cells and contributes to the regulation of their resting membrane potential. Contributes to the regulation of action potential firing in dentate gyrus granule cells and down-regulates their intrinsic excitability. In astrocytes, the heterodimer formed by KCNK1 and KCNK2 is required for rapid glutamate release in response to activation of G-protein coupled receptors, such as F2R and CNR1. Required for normal ion and water transport in the kidney. Contributes to the regulation of the resting membrane potential of pancreatic beta cells. The low channel activity of homodimeric KCNK1 may be due to sumoylation. The low channel activity may be due to rapid internalization from the cell membrane and retention in recycling endosomes. Permeable to monovalent cations with ion selectivity for K(+) &gt; Rb(+) &gt;&gt; NH4(+) &gt;&gt; Cs(+) = Na(+) = Li(+). This chain is Potassium channel subfamily K member 1, found in Bos taurus (Bovine).